The following is a 158-amino-acid chain: NAD(P)H-quinone oxidoreductase subunit J, chloroplastic (158 aa).

It belongs to the complex I 30 kDa subunit family. As to quaternary structure, NDH is composed of at least 16 different subunits, 5 of which are encoded in the nucleus.

It is found in the plastid. Its subcellular location is the chloroplast thylakoid membrane. The enzyme catalyses a plastoquinone + NADH + (n+1) H(+)(in) = a plastoquinol + NAD(+) + n H(+)(out). It carries out the reaction a plastoquinone + NADPH + (n+1) H(+)(in) = a plastoquinol + NADP(+) + n H(+)(out). NDH shuttles electrons from NAD(P)H:plastoquinone, via FMN and iron-sulfur (Fe-S) centers, to quinones in the photosynthetic chain and possibly in a chloroplast respiratory chain. The immediate electron acceptor for the enzyme in this species is believed to be plastoquinone. Couples the redox reaction to proton translocation, and thus conserves the redox energy in a proton gradient. The chain is NAD(P)H-quinone oxidoreductase subunit J, chloroplastic from Illicium oligandrum (Star anise).